The chain runs to 140 residues: Iron sulfur cluster assembly protein 1 (140 aa).

It belongs to the NifU family. Component of the core Fe-S cluster (ISC) assembly machinery. [2Fe-2S] cluster is required as a cofactor.

It is found in the mitosome matrix. Its pathway is cofactor biosynthesis; iron-sulfur cluster biosynthesis. Functionally, scaffold protein for the de novo synthesis of iron-sulfur (Fe-S) clusters within mitosomes, which is required for maturation of both [2Fe-2S] and [4Fe-4S] proteins. First, a [2Fe-2S] cluster is transiently assembled on the scaffold protein ISU1. In a second step, the cluster is released from ISU1, transferred to a glutaredoxin, followed by the formation of [2Fe-2S] proteins, the synthesis of [4Fe-4S] clusters and their target-specific insertion into the recipient apoproteins. Cluster assembly on ISU1 depends on the function of the cysteine desulfurase complex NFS1-ISD11, which serves as the sulfur donor for cluster synthesis, the iron-binding protein frataxin as the putative iron donor, and the electron transfer chain comprised of ferredoxin reductase and ferredoxin, which receive their electrons from NADH. The chain is Iron sulfur cluster assembly protein 1 (ISU1) from Encephalitozoon cuniculi (strain GB-M1) (Microsporidian parasite).